We begin with the raw amino-acid sequence, 427 residues long: Rhodocoxin reductase (427 aa).

2-34 (SIVIIGSGQAGFEAAVSLRSHGFSGTITLVGDE) serves as a coordination point for FAD. 144-172 (SLVVIGAGFIGLEVAAAARKKGLDVTVVE) contributes to the NAD(+) binding site.

Belongs to the FAD-dependent oxidoreductase family. Requires FAD as cofactor.

Its function is as follows. The degradation of the thiocarbamate herbicide EPTC by cytochrome CYP116 (thcB) requires the participation of a flavoprotein, rhodocoxin reductase, and an iron-sulfur protein, rhodocoxin, to mediate the transfer of electrons from NADH to P450 for oxygen activation. This is Rhodocoxin reductase (thcD) from Rhodococcus erythropolis (Arthrobacter picolinophilus).